Reading from the N-terminus, the 61-residue chain is MAKKSMVERWKKPKKFKVREYTRCSICGRVHSVYREFGICRVCFRKMANEGKLPGVRKASW.

Zn(2+)-binding residues include Cys24, Cys27, Cys40, and Cys43.

It belongs to the universal ribosomal protein uS14 family. Zinc-binding uS14 subfamily. As to quaternary structure, part of the 30S ribosomal subunit. Contacts proteins S3 and S10. Zn(2+) is required as a cofactor.

Functionally, binds 16S rRNA, required for the assembly of 30S particles and may also be responsible for determining the conformation of the 16S rRNA at the A site. This is Small ribosomal subunit protein uS14 from Fervidobacterium nodosum (strain ATCC 35602 / DSM 5306 / Rt17-B1).